Here is a 311-residue protein sequence, read N- to C-terminus: Malate dehydrogenase (311 aa).

NAD(+) contacts are provided by residues 7-13 and aspartate 34; that span reads GAAGGIG. 2 residues coordinate substrate: arginine 81 and arginine 87. NAD(+) contacts are provided by residues asparagine 94 and 117–119; that span reads ITN. Asparagine 119 and arginine 153 together coordinate substrate. Histidine 177 (proton acceptor) is an active-site residue. Methionine 227 contacts NAD(+).

This sequence belongs to the LDH/MDH superfamily. MDH type 1 family. As to quaternary structure, homodimer.

The enzyme catalyses (S)-malate + NAD(+) = oxaloacetate + NADH + H(+). Functionally, catalyzes the reversible oxidation of malate to oxaloacetate. This chain is Malate dehydrogenase, found in Pseudoalteromonas atlantica (strain T6c / ATCC BAA-1087).